We begin with the raw amino-acid sequence, 323 residues long: MQRLVPTLRRDGVNPELIPVIRTLLAATKEIAFRVRQGALSGVLGSTLDENIQGETQKQLDVIANQLIKDLLLEEPQVRAIASEEEDTVVAGNPKGAYTVAFDPLDGSSNIDINGQIGTIFTIYPARDDVPADSEAQFQQPGHQQVCAGYVLYGPSTILVMTTGGPTRGYTLDATHGSYLLTQAQLSVPLNTQEFALNMANQRFWSAPFQRYVQDLLLGETGPRAKRFNMRWNAAMVGDVHRVLTRGGIFMYPSDNRNPRQPAKLRLLYEANPMAMLTENAGGKAWSENQRILNIQPDSLHQRVAVILGSANEVDVCMSYLLE.

Mg(2+)-binding residues include Glu84, Asp103, Leu105, and Asp106. Substrate-binding positions include 106-109 (DGSS), Asn198, and Lys264. Residue Glu270 coordinates Mg(2+).

It belongs to the FBPase class 1 family. Homotetramer. Mg(2+) is required as a cofactor.

It is found in the cytoplasm. The catalysed reaction is beta-D-fructose 1,6-bisphosphate + H2O = beta-D-fructose 6-phosphate + phosphate. Its pathway is carbohydrate biosynthesis; gluconeogenesis. The chain is Fructose-1,6-bisphosphatase class 1 from Cellvibrio japonicus (strain Ueda107) (Pseudomonas fluorescens subsp. cellulosa).